The sequence spans 147 residues: Small ribosomal subunit protein uS12 (147 aa).

This sequence belongs to the universal ribosomal protein uS12 family. In terms of assembly, part of the 30S ribosomal subunit.

With S4 and S5 plays an important role in translational accuracy. Located at the interface of the 30S and 50S subunits. This Pyrobaculum arsenaticum (strain DSM 13514 / JCM 11321 / PZ6) protein is Small ribosomal subunit protein uS12.